Reading from the N-terminus, the 545-residue chain is ATP synthase subunit alpha (545 aa).

172-179 (GDRKTGKT) contacts ATP.

This sequence belongs to the ATPase alpha/beta chains family. In terms of assembly, F-type ATPases have 2 components, CF(1) - the catalytic core - and CF(0) - the membrane proton channel. CF(1) has five subunits: alpha(3), beta(3), gamma(1), delta(1), epsilon(1). CF(0) has three main subunits: a(1), b(2) and c(9-12). The alpha and beta chains form an alternating ring which encloses part of the gamma chain. CF(1) is attached to CF(0) by a central stalk formed by the gamma and epsilon chains, while a peripheral stalk is formed by the delta and b chains.

Its subcellular location is the cell membrane. It carries out the reaction ATP + H2O + 4 H(+)(in) = ADP + phosphate + 5 H(+)(out). Functionally, produces ATP from ADP in the presence of a proton gradient across the membrane. The alpha chain is a regulatory subunit. The sequence is that of ATP synthase subunit alpha from Corynebacterium urealyticum (strain ATCC 43042 / DSM 7109).